A 351-amino-acid polypeptide reads, in one-letter code: Beta-hexosaminidase (351 aa).

Residues aspartate 62, arginine 70, arginine 134, and 164–165 (KH) each bind substrate. The Proton donor/acceptor role is filled by histidine 177. The active-site Nucleophile is the aspartate 249.

It belongs to the glycosyl hydrolase 3 family. NagZ subfamily. As to quaternary structure, monomer.

The protein localises to the cytoplasm. It carries out the reaction Hydrolysis of terminal non-reducing N-acetyl-D-hexosamine residues in N-acetyl-beta-D-hexosaminides.. The protein operates within cell wall biogenesis; peptidoglycan recycling. Functionally, plays a role in peptidoglycan recycling by cleaving the terminal beta-1,4-linked N-acetylglucosamine (GlcNAc) from peptide-linked peptidoglycan fragments, giving rise to free GlcNAc, anhydro-N-acetylmuramic acid and anhydro-N-acetylmuramic acid-linked peptides. The chain is Beta-hexosaminidase from Pasteurella multocida (strain Pm70).